Consider the following 191-residue polypeptide: UPF0312 protein Sputw3181_1309 (191 aa).

An N-terminal signal peptide occupies residues 1-22 (MKKQLLSALIGVSLLVPMAASA).

The protein belongs to the UPF0312 family. Type 1 subfamily.

The protein resides in the periplasm. The sequence is that of UPF0312 protein Sputw3181_1309 from Shewanella sp. (strain W3-18-1).